The following is a 322-amino-acid chain: CXXC-type zinc finger protein 5 (322 aa).

Residues 1 to 10 (MSSLGGGSQD) show a composition bias toward gly residues. Positions 1 to 100 (MSSLGGGSQD…SGGGSMMGGE (100 aa)) are disordered. Low complexity-rich tracts occupy residues 11 to 20 (AGGSSSSSTN) and 28 to 52 (SGPK…VADD). A Phosphothreonine modification is found at T53. Residues 87–97 (SSGGSGGGSMM) are compositionally biased toward gly residues. Residues 256-297 (GKKKRKRCGMCAPCRRRINCEQCSSCRNRKTGHQICKFRKCE) form a CXXC-type zinc finger. The Nuclear localization signal signature appears at 257 to 262 (KKKRKR). Zn(2+) is bound by residues C263, C266, C269, C275, C278, C281, C291, and C296.

Interacts with DVL1. Interacts with RBPJ.

It localises to the nucleus. The protein resides in the cytoplasm. In terms of biological role, may indirectly participate in activation of the NF-kappa-B and MAPK pathways. Acts as a mediator of BMP4-mediated modulation of canonical Wnt signaling activity in neural stem cells. Required for DNA damage-induced ATM phosphorylation, p53 activation and cell cycle arrest. Involved in myelopoiesis. Transcription factor. Binds to the oxygen responsive element of COX4I2 and represses its transcription under hypoxia conditions (4% oxygen), as well as normoxia conditions (20% oxygen). May repress COX4I2 transactivation induced by CHCHD2 and RBPJ. Binds preferentially to DNA containing cytidine-phosphate-guanosine (CpG) dinucleotides over CpH (H=A, T, and C), hemimethylated-CpG and hemimethylated-hydroxymethyl-CpG. The polypeptide is CXXC-type zinc finger protein 5 (CXXC5) (Homo sapiens (Human)).